The following is a 201-amino-acid chain: Small ribosomal subunit protein uS4c (201 aa).

The tract at residues 15 to 44 (LGALPGLTSKRPRSGSDLRNQSRSGKKSQY) is disordered. An S4 RNA-binding domain is found at 89–150 (MRLDNILFRL…EQRSRALIQN (62 aa)).

Belongs to the universal ribosomal protein uS4 family. Part of the 30S ribosomal subunit. Contacts protein S5. The interaction surface between S4 and S5 is involved in control of translational fidelity.

It is found in the plastid. The protein localises to the chloroplast. Functionally, one of the primary rRNA binding proteins, it binds directly to 16S rRNA where it nucleates assembly of the body of the 30S subunit. In terms of biological role, with S5 and S12 plays an important role in translational accuracy. The protein is Small ribosomal subunit protein uS4c (rps4) of Calycanthus floridus var. glaucus (Eastern sweetshrub).